The following is a 2237-amino-acid chain: Activating signal cointegrator 1 complex subunit 3-like (2237 aa).

Disordered stretches follow at residues 1-48 (MSEE…RGEM), 71-118 (TIEK…KPID), 242-330 (DEEE…SKLI), and 445-472 (EKTI…DEIK). Over residues 24–37 (ERNRSELKEPKGEP) the composition is skewed to basic and acidic residues. Polar residues predominate over residues 79–97 (VNSSNDTYSTTKKVKNQNP). Over residues 105–114 (RKSNGNNNNE) the composition is skewed to low complexity. The span at 242 to 282 (DEEEEEENLSDFEIRDDDDDDDDVDNNEVDDNNNNDSEAQD) shows a compositional bias: acidic residues. Basic and acidic residues-rich tracts occupy residues 312–325 (QKPD…DKNN) and 446–460 (KTIE…DVEM). The stretch at 440–468 (TAATTEKTIEKTESNKKDVEMKQQQQQQQ) forms a coiled coil. Residues 561-745 (DCAFKTDNNL…FLRVEPDGVF (185 aa)) form the Helicase ATP-binding 1 domain. 574–581 (APTSSGKT) provides a ligand contact to ATP. The DEAH box motif lies at 687-690 (DEIH). One can recognise a Helicase C-terminal 1 domain in the interval 755 to 990 (PLEQQYIGIS…TVRDAVNWLG (236 aa)). The SEC63 1 domain occupies 1050 to 1356 (STELGKVASH…GAEYSLPISF (307 aa)). Residues 1407-1584 (NCMYQSNDNA…WIGATPQTCY (178 aa)) form the Helicase ATP-binding 2 domain. Residue 1420-1427 (APTNSGKT) participates in ATP binding. The DEAH box motif lies at 1526 to 1529 (DELH). The Helicase C-terminal 2 domain maps to 1657-1832 (TLTKPYLVCE…TITKKQDALD (176 aa)). Residues 1892 to 2215 (PLNLGIIASY…GCDQEHELNI (324 aa)) form the SEC63 2 domain.

It belongs to the helicase family.

This Dictyostelium discoideum (Social amoeba) protein is Activating signal cointegrator 1 complex subunit 3-like (ascc3l).